The sequence spans 261 residues: MLLAIDVGNTNAKFALFRGAELLARWRIATDDRRTADEYMVWLDQLMRIEGYDRGDVDAVIISTVVPRALHNLQLLAHKYFGVDALVAGREPVTWGIALKVDEPQSVGADRAVNAIAAQAVEPGRDKLVISFGTATTLDHIGPDGAYLGGIIAPGVNLSLEALVAAAAKLPRIAIEAPASASVIGRTTESQMLIGVYWGYVAMIEGLIARMKAQIGKPLVVVATGGLATLFQEQAHLFDRIEPDLTLNGLMHLYNQGQQKI.

6–13 contacts ATP; the sequence is DVGNTNAK. 108-111 serves as a coordination point for substrate; the sequence is GADR. D110 serves as the catalytic Proton acceptor. Residue T134 participates in ATP binding. Substrate is bound at residue T188.

The protein belongs to the type III pantothenate kinase family. As to quaternary structure, homodimer. NH4(+) is required as a cofactor. It depends on K(+) as a cofactor.

The protein resides in the cytoplasm. It carries out the reaction (R)-pantothenate + ATP = (R)-4'-phosphopantothenate + ADP + H(+). Its pathway is cofactor biosynthesis; coenzyme A biosynthesis; CoA from (R)-pantothenate: step 1/5. Catalyzes the phosphorylation of pantothenate (Pan), the first step in CoA biosynthesis. The chain is Type III pantothenate kinase from Sphingopyxis alaskensis (strain DSM 13593 / LMG 18877 / RB2256) (Sphingomonas alaskensis).